A 418-amino-acid polypeptide reads, in one-letter code: CinA-like protein (418 aa).

The protein belongs to the CinA family.

This Leptospira borgpetersenii serovar Hardjo-bovis (strain L550) protein is CinA-like protein.